The following is a 144-amino-acid chain: Transcription antitermination protein NusB (144 aa).

It belongs to the NusB family.

Involved in transcription antitermination. Required for transcription of ribosomal RNA (rRNA) genes. Binds specifically to the boxA antiterminator sequence of the ribosomal RNA (rrn) operons. This Pelotomaculum thermopropionicum (strain DSM 13744 / JCM 10971 / SI) protein is Transcription antitermination protein NusB.